The following is a 442-amino-acid chain: Trigger factor (442 aa).

Residues Gly162–Pro247 enclose the PPIase FKBP-type domain.

The protein belongs to the FKBP-type PPIase family. Tig subfamily.

It is found in the cytoplasm. It carries out the reaction [protein]-peptidylproline (omega=180) = [protein]-peptidylproline (omega=0). Its function is as follows. Involved in protein export. Acts as a chaperone by maintaining the newly synthesized protein in an open conformation. Functions as a peptidyl-prolyl cis-trans isomerase. This Lactobacillus acidophilus (strain ATCC 700396 / NCK56 / N2 / NCFM) protein is Trigger factor.